Consider the following 453-residue polypeptide: Bifunctional protein GlmU (453 aa).

The tract at residues 1–231 (MERTCLAVIL…EIEMTGCNNR (231 aa)) is pyrophosphorylase. UDP-N-acetyl-alpha-D-glucosamine-binding positions include 10 to 13 (LAAG), lysine 24, glutamine 77, 82 to 83 (GT), 105 to 107 (YGD), glycine 143, glutamate 157, asparagine 172, and asparagine 229. Aspartate 107 contributes to the Mg(2+) binding site. Asparagine 229 is a Mg(2+) binding site. A linker region spans residues 232 to 252 (AELAVIERFWQERRRREMMLA). Residues 253 to 453 (GVTMIAPETV…AIKAAKKAEA (201 aa)) are N-acetyltransferase. UDP-N-acetyl-alpha-D-glucosamine is bound by residues arginine 318 and lysine 336. The active-site Proton acceptor is the histidine 348. Residues tyrosine 351 and asparagine 362 each coordinate UDP-N-acetyl-alpha-D-glucosamine. Residues alanine 365, 371-372 (NY), serine 390, serine 408, and arginine 425 contribute to the acetyl-CoA site.

In the N-terminal section; belongs to the N-acetylglucosamine-1-phosphate uridyltransferase family. The protein in the C-terminal section; belongs to the transferase hexapeptide repeat family. Homotrimer. Mg(2+) serves as cofactor.

The protein resides in the cytoplasm. The catalysed reaction is alpha-D-glucosamine 1-phosphate + acetyl-CoA = N-acetyl-alpha-D-glucosamine 1-phosphate + CoA + H(+). It catalyses the reaction N-acetyl-alpha-D-glucosamine 1-phosphate + UTP + H(+) = UDP-N-acetyl-alpha-D-glucosamine + diphosphate. The protein operates within nucleotide-sugar biosynthesis; UDP-N-acetyl-alpha-D-glucosamine biosynthesis; N-acetyl-alpha-D-glucosamine 1-phosphate from alpha-D-glucosamine 6-phosphate (route II): step 2/2. It functions in the pathway nucleotide-sugar biosynthesis; UDP-N-acetyl-alpha-D-glucosamine biosynthesis; UDP-N-acetyl-alpha-D-glucosamine from N-acetyl-alpha-D-glucosamine 1-phosphate: step 1/1. It participates in bacterial outer membrane biogenesis; LPS lipid A biosynthesis. Catalyzes the last two sequential reactions in the de novo biosynthetic pathway for UDP-N-acetylglucosamine (UDP-GlcNAc). The C-terminal domain catalyzes the transfer of acetyl group from acetyl coenzyme A to glucosamine-1-phosphate (GlcN-1-P) to produce N-acetylglucosamine-1-phosphate (GlcNAc-1-P), which is converted into UDP-GlcNAc by the transfer of uridine 5-monophosphate (from uridine 5-triphosphate), a reaction catalyzed by the N-terminal domain. This Rhizobium etli (strain ATCC 51251 / DSM 11541 / JCM 21823 / NBRC 15573 / CFN 42) protein is Bifunctional protein GlmU.